Reading from the N-terminus, the 60-residue chain is Large ribosomal subunit protein uL30 (60 aa).

It belongs to the universal ribosomal protein uL30 family. As to quaternary structure, part of the 50S ribosomal subunit.

This is Large ribosomal subunit protein uL30 from Verminephrobacter eiseniae (strain EF01-2).